The chain runs to 115 residues: Protein Diedel (115 aa).

A signal peptide spans 1-24 (MASPVVSLLLVGICALAFVHVARS). 5 cysteine pairs are disulfide-bonded: Cys-26-Cys-81, Cys-27-Cys-87, Cys-42-Cys-55, Cys-60-Cys-71, and Cys-76-Cys-83.

This sequence belongs to the Diedel family. Detected in hemolymph (at protein level). Also expressed in the fat body and is probably synthesized in the fat body and secreted into the hemolymph.

The protein localises to the secreted. In terms of biological role, cytokine which promotes survival following infection by Sindbis virus by suppressing the immune deficiency pathway. Following infection by the enteropathogenic bacteria E.carotovora limits intestinal stem cells proliferation. When secreted from muscle or adipose tissue, can attenuate age-related intestinal tissue degeneration by inhibiting apoptosis. The chain is Protein Diedel from Drosophila melanogaster (Fruit fly).